The primary structure comprises 205 residues: Ribosomal RNA small subunit methyltransferase G (205 aa).

S-adenosyl-L-methionine is bound by residues Gly-70, Leu-75, 124–125 (IE), and Arg-138.

Belongs to the methyltransferase superfamily. RNA methyltransferase RsmG family.

Its subcellular location is the cytoplasm. It carries out the reaction guanosine(527) in 16S rRNA + S-adenosyl-L-methionine = N(7)-methylguanosine(527) in 16S rRNA + S-adenosyl-L-homocysteine. In terms of biological role, specifically methylates the N7 position of guanine in position 527 of 16S rRNA. The protein is Ribosomal RNA small subunit methyltransferase G of Ruegeria sp. (strain TM1040) (Silicibacter sp.).